The chain runs to 97 residues: Protein RnfH (97 aa).

This sequence belongs to the UPF0125 (RnfH) family.

The sequence is that of Protein RnfH from Proteus mirabilis (strain HI4320).